A 429-amino-acid polypeptide reads, in one-letter code: Isocitrate dehydrogenase [NADP] (429 aa).

Threonine 108 serves as a coordination point for NADP(+). The D-threo-isocitrate site is built by serine 117, asparagine 119, arginine 123, arginine 133, and arginine 156. A Mg(2+)-binding site is contributed by aspartate 308. NADP(+) contacts are provided by residues 340–346 (HGSAPKY), asparagine 353, tyrosine 393, and arginine 397.

This sequence belongs to the isocitrate and isopropylmalate dehydrogenases family. Homodimer. The cofactor is Mg(2+). Mn(2+) is required as a cofactor.

The enzyme catalyses D-threo-isocitrate + NADP(+) = 2-oxoglutarate + CO2 + NADPH. In terms of biological role, catalyzes the oxidative decarboxylation of isocitrate to 2-oxoglutarate and carbon dioxide with the concomitant reduction of NADP(+). This Caldococcus noboribetus protein is Isocitrate dehydrogenase [NADP] (icd).